Reading from the N-terminus, the 425-residue chain is Serine hydroxymethyltransferase 2 (425 aa).

(6S)-5,6,7,8-tetrahydrofolate is bound by residues Leu121 and 125–127; that span reads GHL. N6-(pyridoxal phosphate)lysine is present on Lys230.

Belongs to the SHMT family. As to quaternary structure, homodimer. The cofactor is pyridoxal 5'-phosphate.

The protein localises to the cytoplasm. It catalyses the reaction (6R)-5,10-methylene-5,6,7,8-tetrahydrofolate + glycine + H2O = (6S)-5,6,7,8-tetrahydrofolate + L-serine. The protein operates within one-carbon metabolism; tetrahydrofolate interconversion. It participates in amino-acid biosynthesis; glycine biosynthesis; glycine from L-serine: step 1/1. In terms of biological role, catalyzes the reversible interconversion of serine and glycine with tetrahydrofolate (THF) serving as the one-carbon carrier. This reaction serves as the major source of one-carbon groups required for the biosynthesis of purines, thymidylate, methionine, and other important biomolecules. Also exhibits THF-independent aldolase activity toward beta-hydroxyamino acids, producing glycine and aldehydes, via a retro-aldol mechanism. The protein is Serine hydroxymethyltransferase 2 of Mycobacterium bovis (strain ATCC BAA-935 / AF2122/97).